The sequence spans 286 residues: Small ribosomal subunit protein uS2 (286 aa).

Residues 213-286 form a disordered region; it reads EEQAQNNKWA…GAQEGGEWGS (74 aa). A compositionally biased stretch (low complexity) spans 227-241; the sequence is SPALSAAVPSSAAPV. The span at 244–270 shows a compositional bias: polar residues; it reads WSSSPSKETTEWGASNTAAAAKSSWSN. Over residues 274-286 the composition is skewed to gly residues; sequence GEWGAQEGGEWGS.

It belongs to the universal ribosomal protein uS2 family. As to quaternary structure, component of the small ribosomal subunit. Mature ribosomes consist of a small (40S) and a large (60S) subunit. The 40S subunit contains about 33 different proteins and 1 molecule of RNA (18S). The 60S subunit contains about 49 different proteins and 3 molecules of RNA (28S, 5.8S and 5S). Interacts with ribosomal protein S21.

The protein resides in the cytoplasm. In terms of biological role, required for the assembly and/or stability of the 40S ribosomal subunit. Required for the processing of the 20S rRNA-precursor to mature 18S rRNA in a late step of the maturation of 40S ribosomal subunits. This is Small ribosomal subunit protein uS2 from Trichoplax adhaerens (Trichoplax reptans).